We begin with the raw amino-acid sequence, 302 residues long: Putative 2-dehydro-3-deoxy-D-gluconate aldolase YagE (302 aa).

Active-site charge relay system residues include S49 and Y112. Y138 (proton donor) is an active-site residue. The active-site Schiff-base intermediate with substrate is the K167.

The protein belongs to the DapA family. As to quaternary structure, a dimer of dimers.

It localises to the cytoplasm. The catalysed reaction is 2-dehydro-3-deoxy-D-gluconate = D-glyceraldehyde + pyruvate. The enzyme catalyses 2-dehydro-3-deoxy-D-arabinonate = glycolaldehyde + pyruvate. Functionally, catalyzes the formation of 2-keto-3-deoxy-gluconate (KDG) from pyruvate and glyceraldehyde. May also function as a 2-dehydro-3-deoxy-D-pentonate aldolase. Overexpression leads to increased growth (over 2 hours) in the presence of the antibiotics norfloxacin, ampicillin and streptomycin. The sequence is that of Putative 2-dehydro-3-deoxy-D-gluconate aldolase YagE (yagE) from Escherichia coli (strain K12).